Here is a 490-residue protein sequence, read N- to C-terminus: Cytochrome P450 2W1 (490 aa).

The N-terminal stretch at 1–22 is a signal peptide; it reads MALLLLLFLGLLGLWGLLCACA. Asn177 carries an N-linked (GlcNAc...) asparagine glycan. Cys433 is a heme binding site.

It belongs to the cytochrome P450 family. It depends on heme as a cofactor. Very low levels are detected in fetal and adult tissues. Highly expressed in several tumor samples, in particular colon and adrenal tumors.

The protein localises to the endoplasmic reticulum lumen. Its subcellular location is the cell membrane. It localises to the microsome membrane. It carries out the reaction all-trans-retinoate + reduced [NADPH--hemoprotein reductase] + O2 = all-trans-4-hydroxyretinoate + oxidized [NADPH--hemoprotein reductase] + H2O + H(+). It catalyses the reaction 1-(9Z-octadecenoyl)-sn-glycero-3-phosphocholine + reduced [NADPH--hemoprotein reductase] + O2 = 1-[8-hydroxy-(9Z)-octadecenoyl]-sn-glycero-3-phosphocholine + oxidized [NADPH--hemoprotein reductase] + H2O + H(+). The enzyme catalyses 1-(9Z-octadecenoyl)-sn-glycero-3-phosphocholine + reduced [NADPH--hemoprotein reductase] + O2 = 1-[11-hydroxy-(9Z)-octadecenoyl]-sn-glycero-3-phosphocholine + oxidized [NADPH--hemoprotein reductase] + H2O + H(+). The catalysed reaction is 1-(9Z-octadecenoyl)-sn-glycero-3-phosphocholine + reduced [NADPH--hemoprotein reductase] + O2 = 1-[(9S,10R)-epoxy-octadecanoyl]-sn-glycero-3-phosphocholine + oxidized [NADPH--hemoprotein reductase] + H2O + H(+). It carries out the reaction 1-(9Z-octadecenoyl)-sn-glycero-3-phosphocholine + reduced [NADPH--hemoprotein reductase] + O2 = 1-[(9R,10S)-epoxy-octadecanoyl]-sn-glycero-3-phosphocholine + oxidized [NADPH--hemoprotein reductase] + H2O + H(+). In terms of biological role, a cytochrome P450 monooxygenase that may play a role in retinoid and phospholipid metabolism. Catalyzes the hydroxylation of saturated carbon hydrogen bonds. Hydroxylates all trans-retinoic acid (atRA) to 4-hydroxyretinoate and may regulate atRA clearance. Other retinoids such as all-trans retinol and all-trans retinal are potential endogenous substrates. Catalyzes both epoxidation of double bonds and hydroxylation of carbon hydrogen bonds of the fatty acyl chain of 1-acylphospholipids/2-lysophospholipids. Can metabolize various lysophospholipids classes including lysophosphatidylcholines (LPCs), lysophosphatidylinositols (LPIs), lysophosphatidylserines (LPSs), lysophosphatidylglycerols (LPGs), lysophosphatidylethanolamines (LPEs) and lysophosphatidic acids (LPAs). Has low or no activity toward 2-acylphospholipids/1-lysophospholipids, diacylphospholipids and free fatty acids. May play a role in tumorigenesis by activating procarcinogens such as aflatoxin B1, polycyclic aromatic hydrocarbon dihydrodiols and aromatic amines. Mechanistically, uses molecular oxygen inserting one oxygen atom into a substrate, and reducing the second into a water molecule, with two electrons provided by NADPH via cytochrome P450 reductase (CPR; NADPH-ferrihemoprotein reductase). This Homo sapiens (Human) protein is Cytochrome P450 2W1.